Reading from the N-terminus, the 181-residue chain is Large ribosomal subunit protein uL6 (181 aa).

Belongs to the universal ribosomal protein uL6 family. In terms of assembly, part of the 50S ribosomal subunit.

In terms of biological role, this protein binds to the 23S rRNA, and is important in its secondary structure. It is located near the subunit interface in the base of the L7/L12 stalk, and near the tRNA binding site of the peptidyltransferase center. In Ruthia magnifica subsp. Calyptogena magnifica, this protein is Large ribosomal subunit protein uL6.